The following is a 179-amino-acid chain: MARLAELYNKEMVPALMKDQNYKNIMEVPKLVKIVVNMGLGEAIQNVKILDSAAEELAAITGQRPVITKAKKSIAGFKLRQGMPIGCAVTLRRDKMYEFLDRLVSVSLPRVRDFKGISGKAFDGKGNYSLGVKEQLIFPEIDYDKVDKIKGLNITIVTTAKTDAEGKALLKLMGLPFRN.

The protein belongs to the universal ribosomal protein uL5 family. Part of the 50S ribosomal subunit; part of the 5S rRNA/L5/L18/L25 subcomplex. Contacts the 5S rRNA and the P site tRNA. Forms a bridge to the 30S subunit in the 70S ribosome.

Functionally, this is one of the proteins that bind and probably mediate the attachment of the 5S RNA into the large ribosomal subunit, where it forms part of the central protuberance. In the 70S ribosome it contacts protein S13 of the 30S subunit (bridge B1b), connecting the 2 subunits; this bridge is implicated in subunit movement. Contacts the P site tRNA; the 5S rRNA and some of its associated proteins might help stabilize positioning of ribosome-bound tRNAs. In Geobacter sp. (strain M21), this protein is Large ribosomal subunit protein uL5.